The primary structure comprises 279 residues: Movement protein (279 aa).

A disordered region spans residues 246-279 (SESEELNVESPPAAIGSSSASRSEAFRPQVVNGL). Residues 254–268 (ESPPAAIGSSSASRS) show a composition bias toward low complexity.

It belongs to the cucumovirus movement protein family.

The protein resides in the host cell junction. The protein localises to the host plasmodesma. Its function is as follows. Transports viral genome to neighboring plant cells directly through plasmosdesmata, without any budding. The movement protein allows efficient cell to cell propagation, by bypassing the host cell wall barrier. Acts by forming a tubular structure at the host plasmodesmata, enlarging it enough to allow free passage of virion capsids. The chain is Movement protein from Cucumber mosaic virus (strain O) (CMV).